The primary structure comprises 749 residues: Fibronectin type III and SPRY domain-containing protein 2 (749 aa).

A coiled-coil region spans residues 205–317 (LNEALESAKD…TIEEMCHEEK (113 aa)). 2 consecutive Fibronectin type-III domains span residues 375–470 (PVIN…TAPS) and 471–564 (PPII…TIGS). Residues 546 to 744 (NMGGPSVRSE…KVHNGISMPK (199 aa)) form the B30.2/SPRY domain.

In terms of assembly, interacts with CMYA5. In cardiac muscles, identified in a complex composed of FSD2, CMYA5 and RYR2.

Its subcellular location is the nucleus. The protein resides in the sarcoplasmic reticulum. It localises to the cytoplasm. It is found in the perinuclear region. The sequence is that of Fibronectin type III and SPRY domain-containing protein 2 (FSD2) from Homo sapiens (Human).